Reading from the N-terminus, the 374-residue chain is N5-carboxyaminoimidazole ribonucleotide synthase (374 aa).

ATP-binding positions include Arg108, Lys148, 153–159 (GYDGKGQ), 183–186 (EQFL), Glu191, His214, and 266–267 (NE). An ATP-grasp domain is found at 112-296 (KQTLQKAGSK…QFDTHILAVT (185 aa)).

The protein belongs to the PurK/PurT family. Homodimer.

The catalysed reaction is 5-amino-1-(5-phospho-beta-D-ribosyl)imidazole + hydrogencarbonate + ATP = 5-carboxyamino-1-(5-phospho-D-ribosyl)imidazole + ADP + phosphate + 2 H(+). Its pathway is purine metabolism; IMP biosynthesis via de novo pathway; 5-amino-1-(5-phospho-D-ribosyl)imidazole-4-carboxylate from 5-amino-1-(5-phospho-D-ribosyl)imidazole (N5-CAIR route): step 1/2. Functionally, catalyzes the ATP-dependent conversion of 5-aminoimidazole ribonucleotide (AIR) and HCO(3)(-) to N5-carboxyaminoimidazole ribonucleotide (N5-CAIR). This is N5-carboxyaminoimidazole ribonucleotide synthase from Staphylococcus haemolyticus (strain JCSC1435).